The sequence spans 724 residues: Catalase-peroxidase (724 aa).

Residues 1–20 form a disordered region; it reads MDENKTKPAGKCPVMHGGNT. Positions 98–225 form a cross-link, tryptophyl-tyrosyl-methioninium (Trp-Tyr) (with M-251); it reads WHSAGTYRTA…LAAVQMGLIY (128 aa). The Proton acceptor role is filled by His99. Positions 225–251 form a cross-link, tryptophyl-tyrosyl-methioninium (Tyr-Met) (with W-98); it reads YVNPEGVDGNPDPLRTAQDMRVTFSRM. His266 contributes to the heme b binding site.

Belongs to the peroxidase family. Peroxidase/catalase subfamily. In terms of assembly, homodimer or homotetramer. The cofactor is heme b. Post-translationally, formation of the three residue Trp-Tyr-Met cross-link is important for the catalase, but not the peroxidase activity of the enzyme.

It carries out the reaction H2O2 + AH2 = A + 2 H2O. The catalysed reaction is 2 H2O2 = O2 + 2 H2O. Bifunctional enzyme with both catalase and broad-spectrum peroxidase activity. The protein is Catalase-peroxidase of Pectobacterium carotovorum subsp. carotovorum (strain PC1).